We begin with the raw amino-acid sequence, 466 residues long: cGMP-specific 3',5'-cGMP phosphodiesterase 3 (466 aa).

Positions 1–120 (MAPQQNIMKQ…NSNNNNSNNN (120 aa)) are enriched in low complexity. The tract at residues 1–150 (MAPQQNIMKQ…NNNKIRGYND (150 aa)) is disordered. Residues 123 to 134 (DDEEEEGDDEDN) are compositionally biased toward acidic residues. Residues 135–150 (NNNNNSNNNKIRGYND) show a composition bias toward low complexity. One can recognise a PDEase domain in the interval 137-458 (NNNSNNNKIR…EIWSNNGSSS (322 aa)). Histidine 213 (proton donor) is an active-site residue. Positions 217, 253, 254, and 364 each coordinate a divalent metal cation.

This sequence belongs to the cyclic nucleotide phosphodiesterase family. A divalent metal cation serves as cofactor.

The protein localises to the cytoplasm. Its subcellular location is the cytosol. The enzyme catalyses 3',5'-cyclic GMP + H2O = GMP + H(+). Its activity is regulated as follows. Inhibited by 3-isobutyl-1-methylxanthine (IBMX). Its function is as follows. Phosphodiesterase specific for cGMP, which is not activated by cGMP. Involved in the degradation of intracellular cGMP. This is cGMP-specific 3',5'-cGMP phosphodiesterase 3 (pde3) from Dictyostelium discoideum (Social amoeba).